The chain runs to 192 residues: Anthranilate synthase component 2 (192 aa).

Positions 1–192 constitute a Glutamine amidotransferase type-1 domain; it reads MIVLVNNRDS…KNFVEMSRNG (192 aa). 50 to 52 contacts L-glutamine; that stretch reads GPG. Cys-78 acts as the Nucleophile; for GATase activity in catalysis. L-glutamine-binding positions include Gln-82 and 127 to 128; that span reads SL. Residues His-165 and Glu-167 each act as for GATase activity in the active site.

As to quaternary structure, heterotetramer consisting of two non-identical subunits: a beta subunit (TrpG) and a large alpha subunit (TrpE).

The enzyme catalyses chorismate + L-glutamine = anthranilate + pyruvate + L-glutamate + H(+). It functions in the pathway amino-acid biosynthesis; L-tryptophan biosynthesis; L-tryptophan from chorismate: step 1/5. Its function is as follows. Part of a heterotetrameric complex that catalyzes the two-step biosynthesis of anthranilate, an intermediate in the biosynthesis of L-tryptophan. In the first step, the glutamine-binding beta subunit (TrpG) of anthranilate synthase (AS) provides the glutamine amidotransferase activity which generates ammonia as a substrate that, along with chorismate, is used in the second step, catalyzed by the large alpha subunit of AS (TrpE) to produce anthranilate. In the absence of TrpG, TrpE can synthesize anthranilate directly from chorismate and high concentrations of ammonia. The polypeptide is Anthranilate synthase component 2 (trpG) (Thermococcus kodakarensis (strain ATCC BAA-918 / JCM 12380 / KOD1) (Pyrococcus kodakaraensis (strain KOD1))).